The chain runs to 568 residues: Probable inactive poly [ADP-ribose] polymerase SRO1 (568 aa).

Positions Met1 to Gly18 are enriched in basic and acidic residues. A disordered region spans residues Met1–Ser32. Positions Arg77–Trp152 constitute a WWE domain. Disordered regions lie at residues Asp220 to Ser241 and Ile453 to Arg500. The 219-residue stretch at Asp245–Ser463 folds into the PARP catalytic domain. Residues Arg497–Gly568 enclose the RST domain.

As to quaternary structure, interacts with DREB2A, DREB2B, DREB2C and NAC082. In terms of tissue distribution, expressed in young developing tissues, such as young leaves and flowers and root tips. In mature plants, expressed in vasculature of leaves and roots.

The protein localises to the nucleus matrix. Probable inactive ADP-ribosyltransferase that functions with RCD1 to regulate oxidative stress, hormonal and developmental responses. May regulate some stress-responsive genes. Seems to play a smaller developmental role than R. The chain is Probable inactive poly [ADP-ribose] polymerase SRO1 (SRO1) from Arabidopsis thaliana (Mouse-ear cress).